The sequence spans 371 residues: Putrescine N-methyltransferase 2 (371 aa).

Polar residues-rich tracts occupy residues methionine 1–phenylalanine 14 and glycine 23–glycine 70. The disordered stretch occupies residues methionine 1–glycine 70. The 238-residue stretch at proline 82–threonine 319 folds into the PABS domain. S-adenosyl-L-methionine-binding positions include glutamine 113, glutamate 188, and aspartate 219 to glycine 220. The active-site Proton acceptor is the aspartate 238. Tyrosine 307 lines the S-adenosyl-L-methionine pocket.

It belongs to the class I-like SAM-binding methyltransferase superfamily. Spermidine/spermine synthase family. As to expression, mainly expressed in roots.

It catalyses the reaction putrescine + S-adenosyl-L-methionine = N-methylputrescine + S-adenosyl-L-homocysteine + H(+). It functions in the pathway alkaloid biosynthesis; nicotine biosynthesis. In terms of biological role, involved in the biosynthesis of pyridine alkaloid natural products, leading mainly to the production of anabasine, anatabine, nicotine and nornicotine, effective deterrents against herbivores with antiparasitic and pesticide properties (neurotoxins); nornicotine serves as the precursor in the synthesis of the carcinogen compound N'-nitrosonornicotine (NNN). Methyltransferase that mediates the conversion of putrescine to N-methylputrescine. In Nicotiana attenuata (Coyote tobacco), this protein is Putrescine N-methyltransferase 2.